We begin with the raw amino-acid sequence, 131 residues long: Small ribosomal subunit protein uS9 (131 aa).

Residues 102–131 are disordered; sequence AGFLTRDPRMKERRKYGLKKARKAPQFSKR. A compositionally biased stretch (basic residues) spans 112 to 131; it reads KERRKYGLKKARKAPQFSKR.

It belongs to the universal ribosomal protein uS9 family.

This is Small ribosomal subunit protein uS9 from Desulfitobacterium hafniense (strain DSM 10664 / DCB-2).